The chain runs to 117 residues: Ribonuclease P protein component (117 aa).

The protein belongs to the RnpA family. Consists of a catalytic RNA component (M1 or rnpB) and a protein subunit.

It carries out the reaction Endonucleolytic cleavage of RNA, removing 5'-extranucleotides from tRNA precursor.. Functionally, RNaseP catalyzes the removal of the 5'-leader sequence from pre-tRNA to produce the mature 5'-terminus. It can also cleave other RNA substrates such as 4.5S RNA. The protein component plays an auxiliary but essential role in vivo by binding to the 5'-leader sequence and broadening the substrate specificity of the ribozyme. In Thermotoga sp. (strain RQ2), this protein is Ribonuclease P protein component.